A 171-amino-acid polypeptide reads, in one-letter code: Putative pre-16S rRNA nuclease (171 aa).

The protein belongs to the YqgF nuclease family.

The protein localises to the cytoplasm. Functionally, could be a nuclease involved in processing of the 5'-end of pre-16S rRNA. The protein is Putative pre-16S rRNA nuclease of Corynebacterium diphtheriae (strain ATCC 700971 / NCTC 13129 / Biotype gravis).